We begin with the raw amino-acid sequence, 513 residues long: Putative ribose/galactose/methyl galactoside import ATP-binding protein 2 (513 aa).

ABC transporter domains are found at residues 24–260 (LTAE…VGRE) and 270–510 (VPIG…VMEL). 56–63 (GENGAGKS) contributes to the ATP binding site.

The protein belongs to the ABC transporter superfamily. Carbohydrate importer 2 (CUT2) (TC 3.A.1.2) family.

The protein localises to the cell inner membrane. It catalyses the reaction D-ribose(out) + ATP + H2O = D-ribose(in) + ADP + phosphate + H(+). The enzyme catalyses D-galactose(out) + ATP + H2O = D-galactose(in) + ADP + phosphate + H(+). Functionally, part of an ABC transporter complex involved in carbohydrate import. Could be involved in ribose, galactose and/or methyl galactoside import. Responsible for energy coupling to the transport system. The chain is Putative ribose/galactose/methyl galactoside import ATP-binding protein 2 from Rhizobium meliloti (strain 1021) (Ensifer meliloti).